A 346-amino-acid chain; its full sequence is Tryptophan--tRNA ligase (346 aa).

ATP-binding positions include 21–23 (QPT) and 30–31 (GN). The 'HIGH' region signature appears at 22–31 (PTADSYHLGN). Aspartate 147 contacts L-tryptophan. ATP-binding positions include 159–161 (GED), isoleucine 198, and 207–211 (KMSKS). The short motif at 207–211 (KMSKS) is the 'KMSKS' region element.

Belongs to the class-I aminoacyl-tRNA synthetase family. Homodimer.

Its subcellular location is the cytoplasm. The enzyme catalyses tRNA(Trp) + L-tryptophan + ATP = L-tryptophyl-tRNA(Trp) + AMP + diphosphate + H(+). Catalyzes the attachment of tryptophan to tRNA(Trp). This chain is Tryptophan--tRNA ligase, found in Corynebacterium efficiens (strain DSM 44549 / YS-314 / AJ 12310 / JCM 11189 / NBRC 100395).